Reading from the N-terminus, the 218-residue chain is Small ribosomal subunit protein uS5 (218 aa).

In terms of domain architecture, S5 DRBM spans 66-129 (LKQELLNVNL…REAKLNLVPV (64 aa)).

The protein belongs to the universal ribosomal protein uS5 family. As to quaternary structure, part of the 30S ribosomal subunit. Contacts protein S4.

Its function is as follows. With S4 and S12 plays an important role in translational accuracy. This is Small ribosomal subunit protein uS5 from Pyrobaculum aerophilum (strain ATCC 51768 / DSM 7523 / JCM 9630 / CIP 104966 / NBRC 100827 / IM2).